A 508-amino-acid chain; its full sequence is Protein S-acyltransferase 18 (508 aa).

2 helical membrane passes run 17-37 and 42-62; these read IVGAVIYSVLVAAFYVFLGFF and IAVIALLSVFSSVAVSVIVLF. A DHHC domain is found at 158–208; sequence SYCSLCDLEVKRSSKHCRTCNRCVEGFDHHCRWLNNCVGKKNYTTFILLMV. The active-site S-palmitoyl cysteine intermediate is Cys188. The next 2 helical transmembrane spans lie at 203–223 and 250–270; these read FILLMVFVLLMLIIEGGTALA and WALATISIILVLFTAYGSAAM. The interval 443-468 is disordered; that stretch reads VSPGRFSSPRRRFSGSSSSTVPSPKQ. A compositionally biased stretch (low complexity) spans 456 to 466; sequence SGSSSSTVPSP.

It belongs to the DHHC palmitoyltransferase family.

The protein resides in the endoplasmic reticulum membrane. The protein localises to the cytoplasmic vesicle membrane. It carries out the reaction L-cysteinyl-[protein] + hexadecanoyl-CoA = S-hexadecanoyl-L-cysteinyl-[protein] + CoA. Functionally, S-acyltransferase involved in protein lipid modification. The protein is Protein S-acyltransferase 18 (PAT18) of Arabidopsis thaliana (Mouse-ear cress).